Reading from the N-terminus, the 1342-residue chain is MVYSYTEKKRIRKDFGKRDQVLDTPYLLSIQLDSFKQFIEADPEGEYGLEAAFRSVFPITSYSGSAELQYVSYRLGEPVFDVKECQIRGVTYSAPLRVKLRMVLYDREAAAGTVKDIKEQEVYMGEIPLMTENGTFVINGTERVIVSQLHRSPGVFFDHDKGKTHSSGKVLYNARVIPYRGSWLDFEFDAKDNLFVRIDRRRKLPASIILRALDFSSEEILANFFETIGFEVKDGKLMMDLVPERLRGETATFDIVANGAVVVETGRRVTARHIRQLEKDAVTQIEVPVEYVVGKVAAKNYTHPQTGEMVVTANQALSLEAVANLSQAGFKHFEVLFTNELDHGAYMSETLRIDSSSSRLEALVEIYRMMRPGEPPTREAAEQLFENLFFSSERYDLSTVGRMKFNRRLSREDETGAGTLTKDDIVEVMKRLIDIRNGNDEVDDIDHLGNRRIRSVGEMAENQFRVGLVRVERAVKERLSLGDLDTLMPQDLINAKPISAAVKEFFGSSQLSQFMDQNNPLSEVTHKRRISALGPGGLTRERAGFEVRDVHPTHYGRLCPIETPEGPNIGLINSLSVYSRTNEYGFLETPYRKVIDGVITDEVDYLSAIEEGKYVIAQANAATTEDGRLKDELIPCRHKGESTFMNADQIQYMDVSPQQIVSVAAALIPFLEHDDANRALMGSNMQRQAVPTLRADKPLVGTGMERAVAVDSGVTVVAKRGGMIDYVDASRIVIKVNEDELLPGEAGIDIYSLTKYTRSNQNTCINQRPCVMLGEPVMAGDVVADGPSTDLGELALGQNLRVAFMPWNGYNFEDSILVNERVVQEDRLTTIHIQELACISRDTKLGPEEITADIPNVGEAALSKLDESGIVYVGAEVKGGDILVGKVTPKGETQLTPEEKLLRAIFGEKASDVKDSSLRVPNGVYGTVVDVQVFTRDGVEKDKRAKEIEEMQLKEAKKDLTEEFKILEDGIFGRSRNLLLAAGYSEDRLNKLDRTKWFELAIEDEAKQIELEQIAEQHIELKADFDKKFENKRRKIIQGDDLAPGVLKIVKVYLAVKRRIQPGDKMAGRHGNKGVISKICPVEDMPHDEYGRPVDIVLNPLGVPSRMNIGQILEVHLGLAAKGIGEKIDRMIKEQRALHEMRDFLQQVYDLGEKDTKQVDIAELSDDDVRTLVGNLRKGLPVATPVFDGAKEHEIKALLKLADLPESGQISLFDGRTGNVFERKVTVGYMYMLKLNHLVDDKMHARSTGSYSLVTQQPLGGKAQFGGQRFGEMEVWALEAYGAAYTLQEMLTVKSDDVNGRTKMYKNIVDGDHRMEPGMPESFNVLLKEIRSLGINIELDEE.

It belongs to the RNA polymerase beta chain family. The RNAP catalytic core consists of 2 alpha, 1 beta, 1 beta' and 1 omega subunit. When a sigma factor is associated with the core the holoenzyme is formed, which can initiate transcription.

It carries out the reaction RNA(n) + a ribonucleoside 5'-triphosphate = RNA(n+1) + diphosphate. DNA-dependent RNA polymerase catalyzes the transcription of DNA into RNA using the four ribonucleoside triphosphates as substrates. This chain is DNA-directed RNA polymerase subunit beta, found in Aeromonas salmonicida (strain A449).